The sequence spans 487 residues: GDP-Man:Man(3)GlcNAc(2)-PP-Dol alpha-1,2-mannosyltransferase (487 aa).

Topologically, residues 1-16 (MAGILCLCGMMRLLTA) are lumenal. A helical transmembrane segment spans residues 17-37 (LFIPVLIASIGLCLVLVLLFI). The Cytoplasmic portion of the chain corresponds to 38 to 231 (CTRLWIQRKK…SNNPVLSRLK (194 aa)). The segment at residues 232–252 (LIYYYLFAVIYGWVGSCSDVI) is an intramembrane region (helical). Residues 253–394 (MVNSTWTFAH…IGLHTMWNEH (142 aa)) are Cytoplasmic-facing. Positions 395-415 (FGIGIVECMAAGTIILAHNSG) form an intramembrane region, helical. The Cytoplasmic segment spans residues 416–487 (GPKLDIVVPY…FLASSEPLFM (72 aa)).

It belongs to the glycosyltransferase group 1 family. Glycosyltransferase 4 subfamily.

It localises to the endoplasmic reticulum membrane. It catalyses the reaction an alpha-D-Man-(1-&gt;3)-[alpha-D-Man-(1-&gt;6)]-beta-D-Man-(1-&gt;4)-beta-D-GlcNAc-(1-&gt;4)-alpha-D-GlcNAc-diphospho-di-trans,poly-cis-dolichol + 2 GDP-alpha-D-mannose = an alpha-D-Man-(1-&gt;2)-alpha-D-Man-(1-&gt;2)-alpha-D-Man-(1-&gt;3)-[alpha-D-Man-(1-&gt;6)]-beta-D-Man-(1-&gt;4)-beta-D-GlcNAc-(1-&gt;4)-alpha-D-GlcNAc-diphospho-di-trans,poly-cis-dolichol + 2 GDP + 2 H(+). It participates in protein modification; protein glycosylation. Its function is as follows. GDP-Man:Man(3)GlcNAc(2)-PP-Dol alpha-1,2-mannosyltransferase that operates in the biosynthetic pathway of dolichol-linked oligosaccharides, the glycan precursors employed in protein asparagine (N)-glycosylation. The assembly of dolichol-linked oligosaccharides begins on the cytosolic side of the endoplasmic reticulum membrane and finishes in its lumen. The sequential addition of sugars to dolichol pyrophosphate produces dolichol-linked oligosaccharides containing fourteen sugars, including two GlcNAcs, nine mannoses and three glucoses. Once assembled, the oligosaccharide is transferred from the lipid to nascent proteins by oligosaccharyltransferases. Catalyzes, on the cytoplasmic face of the endoplasmic reticulum, the addition of the fourth and fifth mannose residues to the dolichol-linked oligosaccharide chain, to produce Man(5)GlcNAc(2)-PP-dolichol core oligosaccharide. Man(5)GlcNAc(2)-PP-dolichol is a substrate for ALG3, the following enzyme in the biosynthetic pathway. This is GDP-Man:Man(3)GlcNAc(2)-PP-Dol alpha-1,2-mannosyltransferase (alg11) from Xenopus tropicalis (Western clawed frog).